Here is a 96-residue protein sequence, read N- to C-terminus: ESAT-6-like protein EsxR (96 aa).

This sequence belongs to the WXG100 family. ESAT-6 subfamily.

The protein resides in the secreted. This chain is ESAT-6-like protein EsxR, found in Mycobacterium leprae (strain TN).